Reading from the N-terminus, the 117-residue chain is MDMRVPAQLLGLLLLWLPGVRFDIQMTQSPSFLSASVGDRVSIICWASEGISSNLAWYLQKPGKSPKLFLYDAKDLHPGVSSRFSGRGSGTDFTLTIISLKPEDFAAYYCKQDFSYP.

Residues Met1–Phe22 form the signal peptide. The tract at residues Asp23–Cys45 is framework-1. Residues Asp23 to Pro117 form the Ig-like domain. Cysteines 45 and 110 form a disulfide. A complementarity-determining-1 region spans residues Trp46 to Ala56. Positions Trp57 to Tyr71 are framework-2. The segment at Asp72 to Pro78 is complementarity-determining-2. The framework-3 stretch occupies residues Gly79–Cys110. The complementarity-determining-3 stretch occupies residues Lys111–Pro117.

Immunoglobulins are composed of two identical heavy chains and two identical light chains; disulfide-linked.

It localises to the secreted. Its subcellular location is the cell membrane. In terms of biological role, probable non-functional open reading frame (ORF) of V region of the variable domain of immunoglobulin light chains. Non-functional ORF generally cannot participate in the synthesis of a productive immunoglobulin chain due to altered V-(D)-J or switch recombination and/or splicing site (at mRNA level) and/or conserved amino acid change (protein level). Immunoglobulins, also known as antibodies, are membrane-bound or secreted glycoproteins produced by B lymphocytes. In the recognition phase of humoral immunity, the membrane-bound immunoglobulins serve as receptors which, upon binding of a specific antigen, trigger the clonal expansion and differentiation of B lymphocytes into immunoglobulins-secreting plasma cells. Secreted immunoglobulins mediate the effector phase of humoral immunity, which results in the elimination of bound antigens. The antigen binding site is formed by the variable domain of one heavy chain, together with that of its associated light chain. Thus, each immunoglobulin has two antigen binding sites with remarkable affinity for a particular antigen. The variable domains are assembled by a process called V-(D)-J rearrangement and can then be subjected to somatic hypermutations which, after exposure to antigen and selection, allow affinity maturation for a particular antigen. In Homo sapiens (Human), this protein is Probable non-functional immunoglobulin kappa variable 1D-42.